Consider the following 560-residue polypeptide: DNA ligase B (560 aa).

Lys124 acts as the N6-AMP-lysine intermediate in catalysis.

Belongs to the NAD-dependent DNA ligase family. LigB subfamily.

It carries out the reaction NAD(+) + (deoxyribonucleotide)n-3'-hydroxyl + 5'-phospho-(deoxyribonucleotide)m = (deoxyribonucleotide)n+m + AMP + beta-nicotinamide D-nucleotide.. Its function is as follows. Catalyzes the formation of phosphodiester linkages between 5'-phosphoryl and 3'-hydroxyl groups in double-stranded DNA using NAD as a coenzyme and as the energy source for the reaction. This Escherichia coli (strain ATCC 8739 / DSM 1576 / NBRC 3972 / NCIMB 8545 / WDCM 00012 / Crooks) protein is DNA ligase B.